The chain runs to 140 residues: Protein PsiE homolog (140 aa).

4 helical membrane-spanning segments follow: residues 16-36 (IVLQYILNVALICLGVVLSVF), 57-77 (YHLIDSIVVFFLYFEFIVMII), 85-105 (HFPLRYFIYIGITAIVRLIII), and 110-130 (PLDLLLYACAIFVLISALFIA).

Belongs to the PsiE family.

It is found in the cell membrane. This chain is Protein PsiE homolog, found in Bacillus cereus (strain ATCC 14579 / DSM 31 / CCUG 7414 / JCM 2152 / NBRC 15305 / NCIMB 9373 / NCTC 2599 / NRRL B-3711).